The primary structure comprises 631 residues: Leukocyte immunoglobulin-like receptor subfamily B member 3 (631 aa).

A signal peptide spans 1-23; the sequence is MTPALTALLCLGLSLGPRTRVQA. Over 24 to 443 the chain is Extracellular; that stretch reads GPFPKPTLWA…STPGLGRYLE (420 aa). 4 Ig-like C2-type domains span residues 42 to 100, 111 to 229, 225 to 314, and 338 to 419; these read GSPV…RCHY, DPLE…SLLT, PSLL…DPLN, and GENV…LVVS. Cys-49 and Cys-98 are oxidised to a cystine. Basic and acidic residues predominate over residues 59 to 70; that stretch reads RLHKEGSPEPLD. The disordered stretch occupies residues 59–78; the sequence is RLHKEGSPEPLDRNNPLEPK. N-linked (GlcNAc...) asparagine glycosylation is present at Asn-139. 2 disulfide bridges follow: Cys-144–Cys-196 and Cys-245–Cys-296. Residues Asn-280, Asn-301, and Asn-340 are each glycosylated (N-linked (GlcNAc...) asparagine). Cys-345 and Cys-396 are disulfide-bonded. The helical transmembrane segment at 444-464 threads the bilayer; the sequence is VLIGVSVAFVLLLFLLLFLLL. At 465-631 the chain is on the cytoplasmic side; it reads RRQRHSKHRT…PSIYATLAIH (167 aa). Residues 470–631 form a disordered region; that stretch reads SKHRTSDQRK…PSIYATLAIH (162 aa). Residues 473–482 are compositionally biased toward basic and acidic residues; sequence RTSDQRKTDF. Positions 512 to 517 match the ITIM motif 1 motif; that stretch reads NLYAAV. 2 stretches are compositionally biased toward basic and acidic residues: residues 520 to 537 and 567 to 581; these read TQSE…HDED and LDTK…RQMD. Residues 588–600 show a composition bias toward polar residues; that stretch reads EASQDVTYAQLHS. 2 short sequence motifs (ITIM motif) span residues 593 to 598 and 623 to 628; these read VTYAQL and SIYATL. Tyr-595 and Tyr-625 each carry phosphotyrosine; by LYN.

In terms of assembly, interacts with LYN, PTPN6/SHP-1 and PTPN11/SHP-2. In terms of processing, phosphorylated on tyrosine residues by LYN. Phosphorylation at Tyr-595 and Tyr-625 is important for interaction with PTPN6/SHP-1 and PTPN11/SHP-2. As to expression, detected in monocytes and B-cells.

It localises to the cell membrane. Functionally, may act as receptor for class I MHC antigens. Becomes activated upon coligation of LILRB3 and immune receptors, such as FCGR2B and the B-cell receptor. Down-regulates antigen-induced B-cell activation by recruiting phosphatases to its immunoreceptor tyrosine-based inhibitor motifs (ITIM). The polypeptide is Leukocyte immunoglobulin-like receptor subfamily B member 3 (LILRB3) (Homo sapiens (Human)).